A 140-amino-acid polypeptide reads, in one-letter code: Vacuolar protein sorting-associated protein 55 homolog (140 aa).

At 1–16 (MADVPGYLRTCLDMGK) the chain is on the cytoplasmic side. Residues 17–37 (IAFLAILVSTGIVLQILACAL) traverse the membrane as a helical segment. Over 38–40 (FNN) the chain is Lumenal. A helical membrane pass occupies residues 41 to 61 (WWPMLSVIMYVLLPMPLLFFG). The Cytoplasmic portion of the chain corresponds to 62–75 (GSDSTSLFNESDNS). The chain crosses the membrane as a helical span at residues 76 to 98 (WINAAKFLTGASAVGSVAIPSIL). Residues 99-108 (KHAGLIGWGA) are Lumenal-facing. The helical transmembrane segment at 109–129 (LALDLSSYVVFLVAILGYICI) threads the bilayer. Residues 130–140 (GDASDNYYSYI) are Cytoplasmic-facing.

Belongs to the OB-RGRP/VPS55 family.

It localises to the endosome membrane. Its function is as follows. Involved in endosomal protein transport. The protein is Vacuolar protein sorting-associated protein 55 homolog of Arabidopsis thaliana (Mouse-ear cress).